The sequence spans 264 residues: MKILQQDDFGYWLLTQGSNLYLVNNELPFGIAKDIDLEGLQAMQIGEWKNHPLWLVAEQESDEREYVSLSHLLSLPEDEFHILSRGVEINHFLKTHKFCGKCGHKTQQTQDELAVQCTHCGYQTYPVICPSIIVAVRRGHEILLANHKRHYSPNGGIYTTLAGFVEVGETFEQAVQREVFEETGISIKNLRYFGSQPWAFPNSQMVGFLADYESGEITLQESEIYDAQWFSYDQPLPELPPTGTIARKLIHATLELCKAEHKCD.

Zn(2+)-binding residues include Cys-99 and Cys-102. A substrate-binding site is contributed by Glu-112. Cys-117 and Cys-120 together coordinate Zn(2+). Substrate is bound at residue Tyr-125. The region spanning 126-253 (PVICPSIIVA…TIARKLIHAT (128 aa)) is the Nudix hydrolase domain. The a divalent metal cation site is built by Ala-162, Glu-178, and Glu-182. The short motif at 163–184 (GFVEVGETFEQAVQREVFEETG) is the Nudix box element. Residue 196 to 203 (QPWAFPNS) coordinates substrate. An a divalent metal cation-binding site is contributed by Glu-223. Residue Ala-246 participates in substrate binding.

Belongs to the Nudix hydrolase family. NudC subfamily. Homodimer. Requires Mg(2+) as cofactor. The cofactor is Mn(2+). Zn(2+) is required as a cofactor.

The enzyme catalyses a 5'-end NAD(+)-phospho-ribonucleoside in mRNA + H2O = a 5'-end phospho-adenosine-phospho-ribonucleoside in mRNA + beta-nicotinamide D-ribonucleotide + 2 H(+). It carries out the reaction NAD(+) + H2O = beta-nicotinamide D-ribonucleotide + AMP + 2 H(+). It catalyses the reaction NADH + H2O = reduced beta-nicotinamide D-ribonucleotide + AMP + 2 H(+). MRNA decapping enzyme that specifically removes the nicotinamide adenine dinucleotide (NAD) cap from a subset of mRNAs by hydrolyzing the diphosphate linkage to produce nicotinamide mononucleotide (NMN) and 5' monophosphate mRNA. The NAD-cap is present at the 5'-end of some mRNAs and stabilizes RNA against 5'-processing. Has preference for mRNAs with a 5'-end purine. Catalyzes the hydrolysis of a broad range of dinucleotide pyrophosphates. The polypeptide is NAD-capped RNA hydrolase NudC (Haemophilus influenzae (strain PittGG)).